Here is a 94-residue protein sequence, read N- to C-terminus: Phosphoribosyl-ATP pyrophosphatase (94 aa).

It belongs to the PRA-PH family.

It localises to the cytoplasm. It catalyses the reaction 1-(5-phospho-beta-D-ribosyl)-ATP + H2O = 1-(5-phospho-beta-D-ribosyl)-5'-AMP + diphosphate + H(+). It participates in amino-acid biosynthesis; L-histidine biosynthesis; L-histidine from 5-phospho-alpha-D-ribose 1-diphosphate: step 2/9. This chain is Phosphoribosyl-ATP pyrophosphatase, found in Pyrobaculum islandicum (strain DSM 4184 / JCM 9189 / GEO3).